The following is a 70-amino-acid chain: Beta-defensin 131B (70 aa).

Positions Met1–Ser22 are cleaved as a signal peptide. Cystine bridges form between Cys29–Cys56, Cys36–Cys50, and Cys40–Cys57.

It belongs to the beta-defensin family.

It localises to the secreted. Its function is as follows. Has antibacterial activity. This is Beta-defensin 131B from Homo sapiens (Human).